A 949-amino-acid polypeptide reads, in one-letter code: Valine--tRNA ligase (949 aa).

The short motif at 40–50 is the 'HIGH' region element; that stretch reads PNVTGSLHMGH. Positions 553 to 557 match the 'KMSKS' region motif; the sequence is KMSKS. K556 serves as a coordination point for ATP. A coiled-coil region spans residues 877 to 949; sequence MAGLIDKEAE…QEQQDKIKAL (73 aa).

It belongs to the class-I aminoacyl-tRNA synthetase family. ValS type 1 subfamily. Monomer.

The protein localises to the cytoplasm. The catalysed reaction is tRNA(Val) + L-valine + ATP = L-valyl-tRNA(Val) + AMP + diphosphate. Its function is as follows. Catalyzes the attachment of valine to tRNA(Val). As ValRS can inadvertently accommodate and process structurally similar amino acids such as threonine, to avoid such errors, it has a 'posttransfer' editing activity that hydrolyzes mischarged Thr-tRNA(Val) in a tRNA-dependent manner. The sequence is that of Valine--tRNA ligase from Idiomarina loihiensis (strain ATCC BAA-735 / DSM 15497 / L2-TR).